The chain runs to 238 residues: Cell division protein A (238 aa).

In terms of assembly, interacts with CdvB.

It localises to the cytoplasm. It is found in the nucleoid. Its subcellular location is the cell membrane. Its function is as follows. Part of a cell division machinery. The CdvA, CdvB and CdvC proteins polymerize between segregating nucleoids and persist throughout cell division, forming a successively smaller structure during constriction. CdvA is a membrane interacting protein that recruits ESCRT-III homologs to the membrane. This chain is Cell division protein A, found in Sulfolobus acidocaldarius (strain ATCC 33909 / DSM 639 / JCM 8929 / NBRC 15157 / NCIMB 11770).